A 403-amino-acid chain; its full sequence is Argininosuccinate synthase (403 aa).

ATP contacts are provided by residues 10-18 (AYSGGVDTS) and Ala38. Tyr89 provides a ligand contact to L-citrulline. ATP is bound at residue Gly119. The L-aspartate site is built by Thr121, Asn125, and Asp126. Position 125 (Asn125) interacts with L-citrulline. The L-citrulline site is built by Arg129, Ser177, Ser186, Glu262, and Tyr274.

The protein belongs to the argininosuccinate synthase family. Type 1 subfamily. In terms of assembly, homotetramer.

The protein resides in the cytoplasm. The catalysed reaction is L-citrulline + L-aspartate + ATP = 2-(N(omega)-L-arginino)succinate + AMP + diphosphate + H(+). Its pathway is amino-acid biosynthesis; L-arginine biosynthesis; L-arginine from L-ornithine and carbamoyl phosphate: step 2/3. The chain is Argininosuccinate synthase from Synechococcus sp. (strain CC9605).